The following is a 355-amino-acid chain: Guanine nucleotide-binding protein G(i) subunit alpha (355 aa).

Glycine 2 carries N-myristoyl glycine lipidation. Cysteine 3 is lipidated: S-palmitoyl cysteine. A G-alpha domain is found at 33 to 355 (REVKLLLLGA…KNNLKDCGLF (323 aa)). Residues 36–49 (KLLLLGAGESGKST) are G1 motif. Residues 41-48 (GAGESGKS), 176-182 (LRTRVKT), 201-205 (DVGGQ), 270-273 (NKKD), and alanine 327 contribute to the GTP site. Mg(2+) contacts are provided by serine 48 and threonine 182. The G2 motif stretch occupies residues 174 to 182 (DVLRTRVKT). Positions 197–206 (FKLFDVGGQR) are G3 motif. The interval 266–273 (ILFLNKKD) is G4 motif. Residues 325 to 330 (TCATDT) are G5 motif.

This sequence belongs to the G-alpha family. G(i/o/t/z) subfamily. As to quaternary structure, g proteins are composed of 3 units; alpha, beta and gamma. The alpha chain contains the guanine nucleotide binding site.

Guanine nucleotide-binding proteins (G proteins) are involved as modulators or transducers in various transmembrane signaling systems. The polypeptide is Guanine nucleotide-binding protein G(i) subunit alpha (Homarus americanus (American lobster)).